The sequence spans 552 residues: Glutamine--tRNA ligase (552 aa).

A 'HIGH' region motif is present at residues Pro34 to His44. ATP is bound by residues Glu35 to Asn37 and His41 to Ser47. 2 residues coordinate L-glutamine: Asp67 and Tyr212. Residues Thr231, Arg261–Leu262, and Met269–Lys271 each bind ATP. Positions Leu268 to Arg272 match the 'KMSKS' region motif.

Belongs to the class-I aminoacyl-tRNA synthetase family. In terms of assembly, monomer.

It localises to the cytoplasm. The enzyme catalyses tRNA(Gln) + L-glutamine + ATP = L-glutaminyl-tRNA(Gln) + AMP + diphosphate. This is Glutamine--tRNA ligase from Hamiltonella defensa subsp. Acyrthosiphon pisum (strain 5AT).